The following is a 584-amino-acid chain: Long-chain-fatty-acid--AMP ligase FadD26 (584 aa).

This sequence belongs to the ATP-dependent AMP-binding enzyme family.

The enzyme catalyses holo-[(phenol)carboxyphthiodiolenone synthase] + a long-chain fatty acid + ATP = a long-chain fatty acyl-[(phenol)carboxyphthiodiolenone synthase] + AMP + diphosphate. The catalysed reaction is eicosanoate + holo-[(phenol)carboxyphthiodiolenone synthase] + ATP = icosanoyl-[(phenol)carboxyphthiodiolenone synthase] + AMP + diphosphate. It catalyses the reaction holo-[(phenol)carboxyphthiodiolenone synthase] + docosanoate + ATP = docosanoyl-[(phenol)carboxyphthiodiolenone synthase] + AMP + diphosphate. The protein operates within lipid metabolism; fatty acid biosynthesis. Catalyzes the activation of long-chain fatty acids as acyl-adenylates (acyl-AMP), which are then transferred to the multifunctional polyketide synthase PpsA for further chain extension. Catalyzes the adenylation of the long-chain fatty acids eicosanoate (C20) or docosanoate (C22), and potentially the very-long-chain fatty acid lignocerate (C24). Involved in the biosynthesis of phthiocerol dimycocerosate (DIM A) and phthiodiolone dimycocerosate (DIM B). The polypeptide is Long-chain-fatty-acid--AMP ligase FadD26 (Mycobacterium marinum (strain ATCC BAA-535 / M)).